A 308-amino-acid chain; its full sequence is Taste receptor type 2 member 107 (308 aa).

Residues 1–7 (MLNSAEG) lie on the Extracellular side of the membrane. A helical membrane pass occupies residues 8 to 28 (ILLCVVTSEAVLGVLGDTYIA). Residues 29–43 (LFNCMDYAKNKKLSK) lie on the Cytoplasmic side of the membrane. Residues 44–64 (IGFILIGLAISRIGVVWIIIL) traverse the membrane as a helical segment. At 65–87 (QGYIQVFFPHMLTSGNITEYITY) the chain is on the extracellular side. The N-linked (GlcNAc...) asparagine glycan is linked to N80. A helical transmembrane segment spans residues 88-108 (IWVFLNHLSVWFVTNLNILYF). The Cytoplasmic portion of the chain corresponds to 109–125 (LKIANFSNSVFLWLKRR). Residues 126-146 (VNAVFIFLSGCLLTSWLLCFP) form a helical membrane-spanning segment. The Extracellular portion of the chain corresponds to 147 to 180 (QMTKILQNSKMHQRNTSWVHQRKNYFLINQSVTN). 2 N-linked (GlcNAc...) asparagine glycosylation sites follow: N161 and N175. The helical transmembrane segment at 181–201 (LGIFFFIIVSLITCFLLIVFL) threads the bilayer. Residues 202 to 232 (WRHVRQMHSDVSGFRDHSTKVHVKAMKFLIS) are Cytoplasmic-facing. Residues 233-253 (FMVFFILHFVGLSIEVLCFIL) form a helical membrane-spanning segment. Over 254-258 (PQNKL) the chain is Extracellular. The helical transmembrane segment at 259–279 (LFITGLTATCLYPCGHSIIVI) threads the bilayer. At 280-308 (LGNKQLKQASLKALQQLKCCETKGNFRVK) the chain is on the cytoplasmic side.

Belongs to the G-protein coupled receptor T2R family.

It is found in the membrane. Its function is as follows. Putative taste receptor which may play a role in the perception of bitterness. This chain is Taste receptor type 2 member 107, found in Mus musculus (Mouse).